A 159-amino-acid chain; its full sequence is MNIQIVTVGKLKEKYLVQGIAEYLKRLSAYAKVTIVEVPDEKAPEVLSDAEMKQVKDKEGARILAKIPDDAYVIALAIDGKMKSSEEFAADLDKLATYGKSKVTFVIGGSLGLSEAVLKRSNERISFGRLTLPHQLMRLVLVEQVYRAFRIVRGEPYHK.

Residues leucine 76, glycine 108, and 127 to 132 each bind S-adenosyl-L-methionine; that span reads FGRLTL.

It belongs to the RNA methyltransferase RlmH family. In terms of assembly, homodimer.

The protein localises to the cytoplasm. The catalysed reaction is pseudouridine(1915) in 23S rRNA + S-adenosyl-L-methionine = N(3)-methylpseudouridine(1915) in 23S rRNA + S-adenosyl-L-homocysteine + H(+). In terms of biological role, specifically methylates the pseudouridine at position 1915 (m3Psi1915) in 23S rRNA. This is Ribosomal RNA large subunit methyltransferase H from Listeria monocytogenes serovar 1/2a (strain ATCC BAA-679 / EGD-e).